The primary structure comprises 297 residues: Probable deoxyhypusine synthase (297 aa).

Residue Lys-265 is the Nucleophile of the active site.

Belongs to the deoxyhypusine synthase family. NAD(+) is required as a cofactor.

It carries out the reaction [eIF5A protein]-L-lysine + spermidine = [eIF5A protein]-deoxyhypusine + propane-1,3-diamine. The protein operates within protein modification; eIF5A hypusination. Functionally, catalyzes the NAD-dependent oxidative cleavage of spermidine and the subsequent transfer of the butylamine moiety of spermidine to the epsilon-amino group of a specific lysine residue of the eIF-5A precursor protein to form the intermediate deoxyhypusine residue. The chain is Probable deoxyhypusine synthase from Methanopyrus kandleri (strain AV19 / DSM 6324 / JCM 9639 / NBRC 100938).